The chain runs to 159 residues: 4-deoxy-4-sulfo-D-erythrose isomerase (159 aa).

The Proton acceptor role is filled by Cys-66.

Belongs to the LacAB/RpiB family.

It carries out the reaction 4-deoxy-4-sulfo-D-erythrose = 4-deoxy-4-sulfo-D-erythrulose. Functionally, part of the sulfo-TK pathway, a D-sulfoquinovose degradation pathway that produces 2-hydroxyethane-1-sulfonate (isethionate). Catalyzes the isomerization of 4-deoxy-4-sulfo-D-erythrose (SE) to 4-deoxy-4-sulfo-D-erythrulose (SEu). The chain is 4-deoxy-4-sulfo-D-erythrose isomerase from Clostridium sp. (strain MSTE9).